Consider the following 440-residue polypeptide: Xylose isomerase (440 aa).

Residues His100 and Asp103 contribute to the active site. Residues Glu231, Glu267, His270, Asp295, Asp306, Asp308, and Asp338 each contribute to the Mg(2+) site.

It belongs to the xylose isomerase family. As to quaternary structure, homotetramer. The cofactor is Mg(2+).

It is found in the cytoplasm. The enzyme catalyses alpha-D-xylose = alpha-D-xylulofuranose. This Paraburkholderia xenovorans (strain LB400) protein is Xylose isomerase.